The sequence spans 512 residues: ATP synthase subunit alpha (512 aa).

169-176 (GDRQTGKT) is a binding site for ATP.

It belongs to the ATPase alpha/beta chains family. In terms of assembly, F-type ATPases have 2 components, CF(1) - the catalytic core - and CF(0) - the membrane proton channel. CF(1) has five subunits: alpha(3), beta(3), gamma(1), delta(1), epsilon(1). CF(0) has three main subunits: a(1), b(2) and c(9-12). The alpha and beta chains form an alternating ring which encloses part of the gamma chain. CF(1) is attached to CF(0) by a central stalk formed by the gamma and epsilon chains, while a peripheral stalk is formed by the delta and b chains.

The protein resides in the cell inner membrane. It catalyses the reaction ATP + H2O + 4 H(+)(in) = ADP + phosphate + 5 H(+)(out). Functionally, produces ATP from ADP in the presence of a proton gradient across the membrane. The alpha chain is a regulatory subunit. The polypeptide is ATP synthase subunit alpha (Orientia tsutsugamushi (strain Boryong) (Rickettsia tsutsugamushi)).